Consider the following 238-residue polypeptide: Probable transcriptional regulatory protein VIBHAR_07036 (238 aa).

This sequence belongs to the TACO1 family.

The protein resides in the cytoplasm. This is Probable transcriptional regulatory protein VIBHAR_07036 from Vibrio campbellii (strain ATCC BAA-1116).